A 189-amino-acid chain; its full sequence is Dual specificity phosphatase 29 (189 aa).

Residues 33–182 form the Tyrosine-protein phosphatase domain; the sequence is HVNEVWPGVY…LRELDTHLQE (150 aa). 126–133 is a binding site for substrate; sequence HCVMGRSR. Cys-127 (phosphocysteine intermediate) is an active-site residue.

This sequence belongs to the protein-tyrosine phosphatase family. Non-receptor class dual specificity subfamily.

It localises to the cytoplasm. Its subcellular location is the nucleus. It catalyses the reaction O-phospho-L-tyrosyl-[protein] + H2O = L-tyrosyl-[protein] + phosphate. The catalysed reaction is O-phospho-L-seryl-[protein] + H2O = L-seryl-[protein] + phosphate. The enzyme catalyses O-phospho-L-threonyl-[protein] + H2O = L-threonyl-[protein] + phosphate. Its function is as follows. Dual specificity phosphatase able to dephosphorylate phosphotyrosine, phosphoserine and phosphothreonine residues within the same substrate, with a preference for phosphotyrosine as a substrate. Involved in the modulation of AMPK and MAPK1/2 signaling pathways. The chain is Dual specificity phosphatase 29 (dusp29) from Danio rerio (Zebrafish).